A 312-amino-acid polypeptide reads, in one-letter code: Bifunctional pinoresinol-lariciresinol reductase (312 aa).

Residues 11 to 17 (GGTGYIG), arginine 36, and lysine 45 each bind NADP(+). The active-site Proton acceptor is lysine 138. Arginine 142 is a binding site for NADP(+). A substrate-binding site is contributed by histidine 270.

This sequence belongs to the NmrA-type oxidoreductase family. Isoflavone reductase subfamily. As to quaternary structure, dimer.

The catalysed reaction is (+)-lariciresinol + NADP(+) = (+)-pinoresinol + NADPH + H(+). It carries out the reaction (-)-secoisolariciresinol + NADP(+) = (+)-lariciresinol + NADPH + H(+). In terms of biological role, reductase involved in lignan biosynthesis. Catalyzes the enantioselective sequential conversion of (+)-pinoresinol into (+)-lariciresinol and of (+)-lariciresinol into (-)-secoisolariciresinol. Abstracts the 4R-hydride from the NADPH cofactor during catalysis. The polypeptide is Bifunctional pinoresinol-lariciresinol reductase (Thuja plicata (Western red-cedar)).